Here is a 369-residue protein sequence, read N- to C-terminus: Methionine import ATP-binding protein MetN (369 aa).

The ABC transporter domain occupies 31–266 (VEMKDVRRMF…PQSPVTQSML (236 aa)). Position 63-70 (63-70 (GRSGAGKS)) interacts with ATP.

Belongs to the ABC transporter superfamily. Methionine importer (TC 3.A.1.24) family. In terms of assembly, the complex is composed of two ATP-binding proteins (MetN), two transmembrane proteins (MetI) and a solute-binding protein (MetQ).

It is found in the cell inner membrane. The catalysed reaction is L-methionine(out) + ATP + H2O = L-methionine(in) + ADP + phosphate + H(+). The enzyme catalyses D-methionine(out) + ATP + H2O = D-methionine(in) + ADP + phosphate + H(+). Functionally, part of the ABC transporter complex MetNIQ involved in methionine import. Responsible for energy coupling to the transport system. The protein is Methionine import ATP-binding protein MetN of Brucella abortus (strain 2308).